The chain runs to 368 residues: tRNA-specific 2-thiouridylase MnmA (368 aa).

ATP contacts are provided by residues 12–19 (GMSGGVDS) and Met38. The interaction with target base in tRNA stretch occupies residues 98–100 (NPD). Cys103 serves as the catalytic Nucleophile. A disulfide bridge links Cys103 with Cys200. Gly128 contacts ATP. The interval 150-152 (KDQ) is interaction with tRNA. Cys200 serves as the catalytic Cysteine persulfide intermediate. Residues 311-312 (RY) are interaction with tRNA.

The protein belongs to the MnmA/TRMU family.

It localises to the cytoplasm. The catalysed reaction is S-sulfanyl-L-cysteinyl-[protein] + uridine(34) in tRNA + AH2 + ATP = 2-thiouridine(34) in tRNA + L-cysteinyl-[protein] + A + AMP + diphosphate + H(+). Its function is as follows. Catalyzes the 2-thiolation of uridine at the wobble position (U34) of tRNA, leading to the formation of s(2)U34. In Aeromonas salmonicida (strain A449), this protein is tRNA-specific 2-thiouridylase MnmA.